The following is a 332-amino-acid chain: Biotin synthase (332 aa).

Residues 51 to 279 enclose the Radical SAM core domain; it reads YKVQLASLLS…LSRVRLSAGR (229 aa). [4Fe-4S] cluster-binding residues include Cys-66, Cys-70, and Cys-73. The [2Fe-2S] cluster site is built by Cys-110, Cys-142, Cys-202, and Arg-274.

The protein belongs to the radical SAM superfamily. Biotin synthase family. As to quaternary structure, homodimer. The cofactor is [4Fe-4S] cluster. Requires [2Fe-2S] cluster as cofactor.

The catalysed reaction is (4R,5S)-dethiobiotin + (sulfur carrier)-SH + 2 reduced [2Fe-2S]-[ferredoxin] + 2 S-adenosyl-L-methionine = (sulfur carrier)-H + biotin + 2 5'-deoxyadenosine + 2 L-methionine + 2 oxidized [2Fe-2S]-[ferredoxin]. The protein operates within cofactor biosynthesis; biotin biosynthesis; biotin from 7,8-diaminononanoate: step 2/2. Its function is as follows. Catalyzes the conversion of dethiobiotin (DTB) to biotin by the insertion of a sulfur atom into dethiobiotin via a radical-based mechanism. This is Biotin synthase from Prochlorococcus marinus (strain MIT 9211).